A 216-amino-acid polypeptide reads, in one-letter code: Ethylene-responsive transcription factor ERF016 (216 aa).

Positions 6-63 (KYTGVRKRKWGKWVAEIRLPNSRDRIWLGSFDSAEKAARAFDAALYCLRGPGARFNFP) form a DNA-binding region, AP2/ERF. Residues 121–145 (EINSGSGGPTLGQVGEDNNNEGNSN) form a disordered region. The span at 135–145 (GEDNNNEGNSN) shows a compositional bias: low complexity.

Belongs to the AP2/ERF transcription factor family. ERF subfamily.

Its subcellular location is the nucleus. Functionally, probably acts as a transcriptional activator. Binds to the GCC-box pathogenesis-related promoter element. May be involved in the regulation of gene expression by stress factors and by components of stress signal transduction pathways. In Arabidopsis thaliana (Mouse-ear cress), this protein is Ethylene-responsive transcription factor ERF016 (ERF016).